Here is a 176-residue protein sequence, read N- to C-terminus: Conjugal transfer protein TraF (176 aa).

The signal sequence occupies residues 1-24; that stretch reads MSKRAVIRFLGVAGLVLSGATVMG.

Belongs to the peptidase S26C family.

The protein localises to the periplasm. In terms of biological role, involved in conjugal transfer of the plasmid. In Agrobacterium fabrum (strain C58 / ATCC 33970) (Agrobacterium tumefaciens (strain C58)), this protein is Conjugal transfer protein TraF (traF).